Reading from the N-terminus, the 714-residue chain is Sodium-dependent acetylcholine transporter (714 aa).

Residues 1 to 21 (MSVSSNDPEQRNGRGMASGNN) form a disordered region. The Cytoplasmic portion of the chain corresponds to 1 to 74 (MSVSSNDPEQ…GNWSNKSDYL (74 aa)). 3 helical membrane passes run 75-95 (LAVI…FLVF), 100-120 (AAFL…MFFM), and 152-172 (ISGF…FYLI). At 173 to 257 (NSFSFSIPWS…LSKGVDDFGT (85 aa)) the chain is on the extracellular side. Residues Asn192, Asn205, Asn211, and Asn222 are each glycosylated (N-linked (GlcNAc...) asparagine). Helical transmembrane passes span 258–278 (LNWY…LCLF), 287–307 (VVYV…TRLL), 336–356 (AAVQ…TIAS), 368–388 (IWLV…LTFS), 422–442 (AGVS…LLVV), 476–496 (VCAL…LFWM), 502–522 (FVLT…INWV), 548–568 (ILFK…LWLD), and 584–604 (ILTA…VGIW). The Cytoplasmic portion of the chain corresponds to 605 to 714 (QFCIAKGTIT…IPKFERETAI (110 aa)).

The protein belongs to the sodium:neurotransmitter symporter (SNF) (TC 2.A.22) family. Interacts with stn-1; part of the DGC. Body wall, and vulval and enteric muscles.

Its subcellular location is the cell membrane. It is found in the postsynaptic cell membrane. Mediates sodium-dependent uptake of acetylcholine at neuromuscular junctions during periods of increased synaptic activity, may also prevent spillover to adjacent synaptic sites. Not involved in the uptake of other neurotransmitters (GABA, glycine, proline and glutamate) and there was also no inhibition of uptake by adding an excess of other candidate substrates (GABA, glycine, taurine, creatine, proline, alanine, carnitine, glutamate and betaine). Required for muscle integrity; altered transport of acetylcholine due to loss of dystrophin-glycoprotein complex (DGC) function results in muscle degeneration. This Caenorhabditis elegans protein is Sodium-dependent acetylcholine transporter.